We begin with the raw amino-acid sequence, 1178 residues long: Pyruvate carboxylase, mitochondrial (1178 aa).

The transit peptide at 1-20 (MLKFRTVHGGLRLLGIRRTS) directs the protein to the mitochondrion. Residues Lys-35 and Lys-39 each carry the N6-acetyllysine modification. Residues 36 to 486 (PIKKVMVANR…DTQFIDENPE (451 aa)) form the Biotin carboxylation domain. Lys-79 carries the post-translational modification N6-acetyllysine; alternate. Lys-79 carries the post-translational modification N6-succinyllysine; alternate. N6-acetyllysine occurs at positions 148 and 152. ATP is bound by residues Lys-152 and Glu-236. The region spanning 156–353 (RAIAIAAGVP…LVHAQIHVAE (198 aa)) is the ATP-grasp domain. Lys-241 carries the N6-acetyllysine modification. His-271 provides a ligand contact to ATP. N6-acetyllysine is present on residues Lys-297 and Lys-319. The active site involves Arg-328. Lys-434 carries the post-translational modification N6-acetyllysine. N6-succinyllysine is present on Lys-442. In terms of domain architecture, Pyruvate carboxyltransferase spans 563–832 (LLLMDTTFRD…DTEVPMERVF (270 aa)). 571-575 (RDAHQ) provides a ligand contact to substrate. Asp-572 is a Mn(2+) binding site. An N6-acetyllysine modification is found at Lys-589. Substrate is bound at residue Arg-644. 2 positions are modified to N6-acetyllysine: Lys-661 and Lys-717. Mn(2+) is bound at residue Lys-741. An N6-carboxylysine modification is found at Lys-741. An N6-acetyllysine modification is found at Lys-748. Residues His-771 and His-773 each coordinate Mn(2+). Lys-892 is subject to N6-acetyllysine. Thr-908 contributes to the substrate binding site. Residues Lys-969 and Lys-992 each carry the N6-acetyllysine modification. Thr-1003 bears the Phosphothreonine mark. An N6-acetyllysine mark is found at Lys-1061, Lys-1090, and Lys-1124. One can recognise a Biotinyl-binding domain in the interval 1109–1178 (KGQIGAPMPG…EGDDLILEIE (70 aa)). Lys-1144 is modified (N6-biotinyllysine).

Homotetramer. Interacts (via the biotin carboxylation domain) with SIRT4. It depends on biotin as a cofactor. Mn(2+) serves as cofactor. In terms of processing, acetylation of Lys-748 might play a role in catalytic activity regulation.

Its subcellular location is the mitochondrion matrix. It carries out the reaction hydrogencarbonate + pyruvate + ATP = oxaloacetate + ADP + phosphate + H(+). The protein operates within carbohydrate biosynthesis; gluconeogenesis. Pyruvate carboxylase catalyzes a 2-step reaction, involving the ATP-dependent carboxylation of the covalently attached biotin in the first step and the transfer of the carboxyl group to pyruvate in the second. Catalyzes in a tissue specific manner, the initial reactions of glucose (liver, kidney) and lipid (adipose tissue, liver, brain) synthesis from pyruvate. In Homo sapiens (Human), this protein is Pyruvate carboxylase, mitochondrial.